Here is a 218-residue protein sequence, read N- to C-terminus: Pyridoxal 5'-phosphate synthase subunit PdxT (218 aa).

Position 54 to 56 (Gly-54 to Ser-56) interacts with L-glutamine. Cys-86 serves as the catalytic Nucleophile. L-glutamine-binding positions include Arg-120 and Ile-149–Arg-150. Catalysis depends on charge relay system residues His-197 and Glu-199.

It belongs to the glutaminase PdxT/SNO family. In terms of assembly, in the presence of PdxS, forms a dodecamer of heterodimers. Only shows activity in the heterodimer.

It carries out the reaction aldehydo-D-ribose 5-phosphate + D-glyceraldehyde 3-phosphate + L-glutamine = pyridoxal 5'-phosphate + L-glutamate + phosphate + 3 H2O + H(+). It catalyses the reaction L-glutamine + H2O = L-glutamate + NH4(+). Its pathway is cofactor biosynthesis; pyridoxal 5'-phosphate biosynthesis. Its function is as follows. Catalyzes the hydrolysis of glutamine to glutamate and ammonia as part of the biosynthesis of pyridoxal 5'-phosphate. The resulting ammonia molecule is channeled to the active site of PdxS. The chain is Pyridoxal 5'-phosphate synthase subunit PdxT from Saccharopolyspora erythraea (strain ATCC 11635 / DSM 40517 / JCM 4748 / NBRC 13426 / NCIMB 8594 / NRRL 2338).